Here is a 412-residue protein sequence, read N- to C-terminus: Alpha-ketoglutarate-dependent sulfonate dioxygenase (412 aa).

The residue at position 52 (Ser52) is a Phosphoserine. Fe cation is bound by residues His218 and Asp220. 2-oxoglutarate is bound by residues Thr245 and Trp352. A Fe cation-binding site is contributed by His367. Residues Arg379 and Arg383 each contribute to the 2-oxoglutarate site.

Belongs to the TfdA dioxygenase family. The cofactor is Fe(2+).

Its pathway is organosulfur degradation; alkanesulfonate degradation. In terms of biological role, acts as an alpha-ketoglutarate-dependent dioxygenase active on sulfonates. Although taurine is a poor substrate, a variety of other sulfonates are utilized, with the best natural substrates being isethionate and taurocholate. In Saccharomyces cerevisiae (strain ATCC 204508 / S288c) (Baker's yeast), this protein is Alpha-ketoglutarate-dependent sulfonate dioxygenase (JLP1).